Here is a 490-residue protein sequence, read N- to C-terminus: Transcriptional regulator FleQ (490 aa).

Leucine 142 contributes to the 3',3'-c-di-GMP binding site. ADP-binding positions include valine 147 and 177–182 (GTGKEV). 3',3'-c-di-GMP contacts are provided by residues 186–189 (NLHY) and 330–341 (ELISRMEHEKRG). 2 residues coordinate ADP: arginine 334 and arginine 363.

In terms of assembly, forms homodimers. Forms homohexamers that inhibit transcription initiation. Interacts with FleN; this complex is formed in the presence as well as in the absence of c-di-GMP or ATP.

With respect to regulation, C-di-GMP interaction leads to active site obstruction, hexameric ring destabilization thus relieving DNA bending and activating gene transcription. Its function is as follows. AAA+ ATPase enhancer-binding protein that acts as a transcription regulator and plays a role in the modulation of mucin adhesion and flagellar gene expression. In addition to flagella genes, also regulates expression of biofilm-related genes. Functions as a transcriptional repressor in the absence of c-di-GMP and as an activator when c-di-GMP is present. The sequence is that of Transcriptional regulator FleQ from Pseudomonas aeruginosa (strain ATCC 15692 / DSM 22644 / CIP 104116 / JCM 14847 / LMG 12228 / 1C / PRS 101 / PAO1).